Consider the following 106-residue polypeptide: uncharacterized protein (106 aa).

The N-terminal stretch at 1–31 is a signal peptide; that stretch reads MNNERLMLKGIFLGAAAGAALSLLHKPTRQA. The stretch at 57–89 forms a coiled coil; sequence VITKVDEAKKLARTLSKEVDFVNQQVKELKKTT.

This is an uncharacterized protein from Bacillus subtilis (strain 168).